Reading from the N-terminus, the 342-residue chain is P2Y purinoceptor 12 (342 aa).

At 1–27 (MQAVDNLTSAPGNTSLCTRDYKITQVL) the chain is on the extracellular side. 2 N-linked (GlcNAc...) asparagine glycosylation sites follow: N6 and N13. 2 cysteine pairs are disulfide-bonded: C17/C270 and C97/C175. The chain crosses the membrane as a helical span at residues 28–50 (FPLLYTVLFFVGLITNGLAMRIF). Topologically, residues 51 to 61 (FQIRSKSNFII) are cytoplasmic. Residues S55 and S57 each carry the phosphoserine modification. A helical transmembrane segment spans residues 62–82 (FLKNTVISDLLMILTFPFKIL). Residues 83-97 (SDAKLGTGPLRTFVC) lie on the Extracellular side of the membrane. ADP contacts are provided by R93, C97, and Y105. A helical transmembrane segment spans residues 98 to 118 (QVTSVIFYFTMYISISFLGLI). Residues 119-142 (TIDRYQKTTRPFKTSNPKNLLGAK) are Cytoplasmic-facing. Residues 143–162 (ILSVVIWAFMFLLSLPNMIL) traverse the membrane as a helical segment. Residues 156–159 (SLPN), 175–179 (CSFLK), H187, and N191 each bind ADP. Over 163–185 (TNRQPRDKNVKKCSFLKSEFGLV) the chain is Extracellular. The chain crosses the membrane as a helical span at residues 186–207 (WHEIVNYICQVIFWINFLIVIV). At 208 to 233 (CYTLITKELYRSYVRTRGVGKVPRKK) the chain is on the cytoplasmic side. Residues 234–259 (VNVKVFIIIAVFFICFVPFHFARIPY) traverse the membrane as a helical segment. ADP contacts are provided by residues 256–259 (RIPY), Q263, and K280. Residues 260–278 (TLSQTRDVFDCTAENTLFY) are Extracellular-facing. A helical transmembrane segment spans residues 279–298 (VKESTLWLTSLNACLDPFIY). Topologically, residues 299–342 (FFLCKSFRNSLISMLKCPNSATSLSQDNRKKEQDGGDPNEETPM) are cytoplasmic. A disordered region spans residues 319–342 (ATSLSQDNRKKEQDGGDPNEETPM). Over residues 333–342 (GGDPNEETPM) the composition is skewed to acidic residues.

It belongs to the G-protein coupled receptor 1 family. As to expression, highly expressed in the platelets, lower levels in the brain. Lowest levels in the lung, appendix, pituitary and adrenal gland. Expressed in the spinal cord and in the fetal brain.

Its subcellular location is the cell membrane. In terms of biological role, receptor for ADP and ATP coupled to G-proteins that inhibit the adenylyl cyclase second messenger system. Not activated by UDP and UTP. Required for normal platelet aggregation and blood coagulation. The sequence is that of P2Y purinoceptor 12 (P2RY12) from Homo sapiens (Human).